Reading from the N-terminus, the 245-residue chain is Phosphoribosyl isomerase A (245 aa).

Aspartate 11 (proton acceptor) is an active-site residue. Aspartate 130 (proton donor) is an active-site residue.

Belongs to the HisA/HisF family.

The protein resides in the cytoplasm. It carries out the reaction 1-(5-phospho-beta-D-ribosyl)-5-[(5-phospho-beta-D-ribosylamino)methylideneamino]imidazole-4-carboxamide = 5-[(5-phospho-1-deoxy-D-ribulos-1-ylimino)methylamino]-1-(5-phospho-beta-D-ribosyl)imidazole-4-carboxamide. The catalysed reaction is N-(5-phospho-beta-D-ribosyl)anthranilate = 1-(2-carboxyphenylamino)-1-deoxy-D-ribulose 5-phosphate. Its pathway is amino-acid biosynthesis; L-histidine biosynthesis; L-histidine from 5-phospho-alpha-D-ribose 1-diphosphate: step 4/9. It functions in the pathway amino-acid biosynthesis; L-tryptophan biosynthesis; L-tryptophan from chorismate: step 3/5. In terms of biological role, involved in both the histidine and tryptophan biosynthetic pathways. This is Phosphoribosyl isomerase A (priA) from Mycobacterium bovis (strain ATCC BAA-935 / AF2122/97).